We begin with the raw amino-acid sequence, 338 residues long: Lipoate-protein ligase A (338 aa).

Positions 29–216 (PADQRVLFLW…AYCEHYQQQV (188 aa)) constitute a BPL/LPL catalytic domain. ATP contacts are provided by residues R71, 76–79 (GAVF), and K134. K134 lines the (R)-lipoate pocket.

Belongs to the LplA family. Monomer.

Its subcellular location is the cytoplasm. It catalyses the reaction L-lysyl-[lipoyl-carrier protein] + (R)-lipoate + ATP = N(6)-[(R)-lipoyl]-L-lysyl-[lipoyl-carrier protein] + AMP + diphosphate + H(+). Its pathway is protein modification; protein lipoylation via exogenous pathway; protein N(6)-(lipoyl)lysine from lipoate: step 1/2. It functions in the pathway protein modification; protein lipoylation via exogenous pathway; protein N(6)-(lipoyl)lysine from lipoate: step 2/2. Catalyzes both the ATP-dependent activation of exogenously supplied lipoate to lipoyl-AMP and the transfer of the activated lipoyl onto the lipoyl domains of lipoate-dependent enzymes. The protein is Lipoate-protein ligase A of Vibrio cholerae serotype O1 (strain ATCC 39541 / Classical Ogawa 395 / O395).